We begin with the raw amino-acid sequence, 905 residues long: Alanine--tRNA ligase (905 aa).

The Zn(2+) site is built by histidine 595, histidine 599, cysteine 696, and histidine 700.

It belongs to the class-II aminoacyl-tRNA synthetase family. Zn(2+) serves as cofactor.

The protein localises to the cytoplasm. The catalysed reaction is tRNA(Ala) + L-alanine + ATP = L-alanyl-tRNA(Ala) + AMP + diphosphate. Functionally, catalyzes the attachment of alanine to tRNA(Ala) in a two-step reaction: alanine is first activated by ATP to form Ala-AMP and then transferred to the acceptor end of tRNA(Ala). Also edits incorrectly charged Ser-tRNA(Ala) and Gly-tRNA(Ala) via its editing domain. This is Alanine--tRNA ligase from Anaeromyxobacter dehalogenans (strain 2CP-C).